A 244-amino-acid chain; its full sequence is Ribonuclease 3 (244 aa).

The 130-residue stretch at 17–146 folds into the RNase III domain; the sequence is FEKKMQELNL…FVGALYLDQG (130 aa). E59 serves as a coordination point for Mg(2+). Residue D63 is part of the active site. D132 and E135 together coordinate Mg(2+). E135 is an active-site residue. The DRBM domain maps to 172–241; sequence DFKTQFQEYV…AERAYKILKN (70 aa).

Belongs to the ribonuclease III family. In terms of assembly, homodimer. Mg(2+) is required as a cofactor.

The protein localises to the cytoplasm. It carries out the reaction Endonucleolytic cleavage to 5'-phosphomonoester.. In terms of biological role, digests double-stranded RNA. Involved in the processing of primary rRNA transcript to yield the immediate precursors to the large and small rRNAs (23S and 16S). Processes some mRNAs, and tRNAs when they are encoded in the rRNA operon. Processes pre-crRNA and tracrRNA of type II CRISPR loci if present in the organism. This Staphylococcus saprophyticus subsp. saprophyticus (strain ATCC 15305 / DSM 20229 / NCIMB 8711 / NCTC 7292 / S-41) protein is Ribonuclease 3.